Here is a 215-residue protein sequence, read N- to C-terminus: Protein Thf1 (215 aa).

Residues 182–213 (ERMDQAVELVEETIAAEKRKKERRLEEQAQRT) adopt a coiled-coil conformation.

The protein belongs to the THF1 family.

Functionally, may be involved in photosynthetic membrane biogenesis. The chain is Protein Thf1 from Synechococcus sp. (strain CC9605).